The primary structure comprises 187 residues: UPF0301 protein Pcryo_0062 (187 aa).

Belongs to the UPF0301 (AlgH) family.

In Psychrobacter cryohalolentis (strain ATCC BAA-1226 / DSM 17306 / VKM B-2378 / K5), this protein is UPF0301 protein Pcryo_0062.